The chain runs to 100 residues: Large ribosomal subunit protein uL23 (100 aa).

The protein belongs to the universal ribosomal protein uL23 family. In terms of assembly, part of the 50S ribosomal subunit. Contacts protein L29, and trigger factor when it is bound to the ribosome.

Its function is as follows. One of the early assembly proteins it binds 23S rRNA. One of the proteins that surrounds the polypeptide exit tunnel on the outside of the ribosome. Forms the main docking site for trigger factor binding to the ribosome. This Pseudoalteromonas atlantica (strain T6c / ATCC BAA-1087) protein is Large ribosomal subunit protein uL23.